A 117-amino-acid polypeptide reads, in one-letter code: Immunoglobulin kappa variable 1-9 (117 aa).

A signal peptide spans 1–22; sequence MDMRVPAQLLGLLLLWLPGARC. Residues 23 to 45 form a framework-1 region; that stretch reads DIQLTQSPSFLSASVGDRVTITC. The region spanning 24–117 is the Ig-like domain; sequence IQLTQSPSFL…YYCQQLNSYP (94 aa). Cys-45 and Cys-110 form a disulfide bridge. A complementarity-determining-1 region spans residues 46–56; the sequence is RASQGISSYLA. Residues 57-71 are framework-2; the sequence is WYQQKPGKAPKLLIY. Residues 72-78 form a complementarity-determining-2 region; it reads AASTLQS. Residues 79-110 are framework-3; that stretch reads GVPSRFSGSGSGTEFTLTISSLQPEDFATYYC. A complementarity-determining-3 region spans residues 111-117; sequence QQLNSYP.

Immunoglobulins are composed of two identical heavy chains and two identical light chains; disulfide-linked.

It localises to the secreted. The protein resides in the cell membrane. In terms of biological role, v region of the variable domain of immunoglobulin light chains that participates in the antigen recognition. Immunoglobulins, also known as antibodies, are membrane-bound or secreted glycoproteins produced by B lymphocytes. In the recognition phase of humoral immunity, the membrane-bound immunoglobulins serve as receptors which, upon binding of a specific antigen, trigger the clonal expansion and differentiation of B lymphocytes into immunoglobulins-secreting plasma cells. Secreted immunoglobulins mediate the effector phase of humoral immunity, which results in the elimination of bound antigens. The antigen binding site is formed by the variable domain of one heavy chain, together with that of its associated light chain. Thus, each immunoglobulin has two antigen binding sites with remarkable affinity for a particular antigen. The variable domains are assembled by a process called V-(D)-J rearrangement and can then be subjected to somatic hypermutations which, after exposure to antigen and selection, allow affinity maturation for a particular antigen. The polypeptide is Immunoglobulin kappa variable 1-9 (Homo sapiens (Human)).